A 260-amino-acid chain; its full sequence is MAITPTQLLDWKRQQRPIVALTAWDTAIASVLDAAGVEIILVGDSLGMVALGYETTLPVSLDTMIHHTAAVKRGVQRALVVCDLPFLTYQESPAQAMGSAGRVLQETGAQAVKLEGGHPRMVETVARLTEVGIPVMGHVGLTPQSVHQLGYRQQGQDPATAEKILHQAIALAEAGVFAIVLEHIPSELAASITEQLPIPTIGIGAGPQCDGQVLVTADLLGLTVKQPPFAPAYLNLRHTITETVHKFSGEVRQRQFPRRG.

Aspartate 44 and aspartate 83 together coordinate Mg(2+). 3-methyl-2-oxobutanoate is bound by residues aspartate 44–serine 45, aspartate 83, and lysine 113. Residue glutamate 115 coordinates Mg(2+). The active-site Proton acceptor is glutamate 182.

The protein belongs to the PanB family. As to quaternary structure, homodecamer; pentamer of dimers. Requires Mg(2+) as cofactor.

The protein localises to the cytoplasm. The enzyme catalyses 3-methyl-2-oxobutanoate + (6R)-5,10-methylene-5,6,7,8-tetrahydrofolate + H2O = 2-dehydropantoate + (6S)-5,6,7,8-tetrahydrofolate. Its pathway is cofactor biosynthesis; (R)-pantothenate biosynthesis; (R)-pantoate from 3-methyl-2-oxobutanoate: step 1/2. In terms of biological role, catalyzes the reversible reaction in which hydroxymethyl group from 5,10-methylenetetrahydrofolate is transferred onto alpha-ketoisovalerate to form ketopantoate. The sequence is that of 3-methyl-2-oxobutanoate hydroxymethyltransferase from Synechocystis sp. (strain ATCC 27184 / PCC 6803 / Kazusa).